A 450-amino-acid chain; its full sequence is FAD-linked oxidoreductase ptmO (450 aa).

The 172-residue stretch at 32 to 203 folds into the FAD-binding PCMH-type domain; the sequence is PPELPYAIVR…TRFFIRTRPA (172 aa).

It belongs to the oxygen-dependent FAD-linked oxidoreductase family. FAD serves as cofactor.

Its pathway is secondary metabolite biosynthesis. FAD-linked oxidoreductase; part of the gene cluster that mediates the biosynthesis of the indole diterpenes penitrems. The geranylgeranyl diphosphate (GGPP) synthase ptmG catalyzes the first step in penitrem biosynthesis via conversion of farnesyl pyrophosphate and isopentyl pyrophosphate into geranylgeranyl pyrophosphate (GGPP). Condensation of indole-3-glycerol phosphate with GGPP by the prenyl transferase ptmC then forms 3-geranylgeranylindole (3-GGI). Epoxidation by the FAD-dependent monooxygenase ptmM leads to a epoxidized-GGI that is substrate of the terpene cyclase ptmB for cyclization to yield paspaline. Paspaline is subsequently converted to 13-desoxypaxilline by the cytochrome P450 monooxygenase ptmP, the latter being then converted to paxilline by the cytochrome P450 monooxygenase ptmQ. Paxilline is converted to beta-paxitriol via C-10 ketoreduction by the short-chain dehydrogenase ptmH which can be monoprenylated at the C-20 by the indole diterpene prenyltransferase ptmD. A two-step elimination (acetylation and elimination) process performed by the O-acetyltransferase ptmV and ptmI leads to the production of the prenylated form of penijanthine. The FAD-linked oxidoreductase ptmO then converts the prenylated form of penijanthine into PC-M5 which is in turn transformed into PC-M4 by the aromatic dimethylallyltransferase ptmE. Five sequential oxidative transformations performed by the cytochrome P450 monooxygenases ptmK, ptmU, ptmL, ptmN and ptmJ yield the various penitrem compounds. PtmK, ptmU and ptmM are involved in the formation of the key bicyclic ring of penitrem C via the formation of the intermediates secopenitrem D and penitrem D. PtmL catalyzes the epoxidation of penitrem D and C to yield penitrem B and F, respectively. PtmJ catalyzes the last benzylic hydroxylation to convert penitrem B to prenitrem E and penitrem F to penitrem A. The sequence is that of FAD-linked oxidoreductase ptmO from Penicillium ochrochloron.